The following is a 906-amino-acid chain: Cadherin-2 (906 aa).

An N-terminal signal peptide occupies residues 1-25 (MCRIAGAPRTLLPLLAALLQASVEA). A propeptide spanning residues 26 to 159 (SGEIALCKTG…HSGALQRQKR (134 aa)) is cleaved from the precursor. 5 consecutive Cadherin domains span residues 160–267 (DWVI…RPEF), 268–382 (LHQV…PPEF), 383–497 (TAMT…NPYF), 498–603 (APNP…DNAP), and 604–717 (QVLP…RIVG). Residues 160–724 (DWVIPPINLP…IVGAGLGTGA (565 aa)) lie on the Extracellular side of the membrane. Glu-170 is a binding site for Ca(2+). N-linked (GlcNAc...) asparagine glycosylation is present at Asn-190. Ca(2+) is bound by residues Asp-226, Glu-228, Asp-259, Met-260, Asn-261, Asp-262, and Asn-263. An N-linked (GlcNAc...) asparagine glycan is attached at Asn-273. Residues Asp-293, Asp-295, and Asn-301 each contribute to the Ca(2+) site. Asn-325 carries an N-linked (GlcNAc...) asparagine glycan. Ca(2+) is bound at residue Asp-353. Asn-402, Asn-572, Asn-651, and Asn-692 each carry an N-linked (GlcNAc...) asparagine glycan. A helical transmembrane segment spans residues 725–745 (IIAILLCIIILLILVLMFVVW). Residues 746–906 (MKRRDKERQA…LADMYGGGDD (161 aa)) are Cytoplasmic-facing. Residues 863–880 (SGSTAGSLSSLNSSSSGG) show a composition bias toward low complexity. A disordered region spans residues 863-883 (SGSTAGSLSSLNSSSSGGDQD).

Homodimer (via extracellular region). Can also form heterodimers with other cadherins (via extracellular region). Dimerization occurs in trans, i.e. with a cadherin chain from another cell. Interacts with CDCP1. Interacts with PCDH8; this complex may also include TAOK2. The interaction with PCDH8 may lead to internalization through TAOK2/p38 MAPK pathway. Identified in a complex containing FGFR4, NCAM1, CDH2, PLCG1, FRS2, SRC, SHC1, GAP43 and CTTN. May interact with OBSCN (via protein kinase domain 2). Interacts with FBXO45. Cleaved by MMP24. Ectodomain cleavage leads to the generation of a soluble 90 kDa N-terminal soluble fragment and a 45 kDa membrane-bound C-terminal fragment 1 (CTF1), which is further cleaved by gamma-secretase into a 35 kDa. Cleavage in neural stem cells by MMP24 affects CDH2-mediated anchorage of neural stem cells to ependymocytes in the adult subependymal zone, leading to modulate neural stem cell quiescence. Post-translationally, may be phosphorylated by OBSCN. In terms of processing, O-glycosylated on Ser and Thr residues. In terms of tissue distribution, expressed in cardiac muscle (at protein level).

Its subcellular location is the cell membrane. The protein localises to the sarcolemma. The protein resides in the cell junction. It localises to the adherens junction. It is found in the desmosome. Its subcellular location is the cell surface. In terms of biological role, calcium-dependent cell adhesion protein; preferentially mediates homotypic cell-cell adhesion by dimerization with a CDH2 chain from another cell. Cadherins may thus contribute to the sorting of heterogeneous cell types. Acts as a regulator of neural stem cells quiescence by mediating anchorage of neural stem cells to ependymocytes in the adult subependymal zone: upon cleavage by MMP24, CDH2-mediated anchorage is affected, leading to modulate neural stem cell quiescence. Plays a role in cell-to-cell junction formation between pancreatic beta cells and neural crest stem (NCS) cells, promoting the formation of processes by NCS cells. Required for proper neurite branching. Required for pre- and postsynaptic organization. CDH2 may be involved in neuronal recognition mechanism. In hippocampal neurons, may regulate dendritic spine density. The sequence is that of Cadherin-2 (Cdh2) from Mus musculus (Mouse).